Reading from the N-terminus, the 282-residue chain is NADH-ubiquinone oxidoreductase chain 2 (282 aa).

The next 7 helical transmembrane spans lie at 17-37 (ILTNNVIVWWSIFLLMTVVFI), 58-78 (SLGLLFLLCSGGLLQFFIILL), 87-107 (FWIFNVTNNIFNYGLMWFLTF), 115-135 (ILLQIFWLSSVYILLFGLLIC), 166-186 (FSMFNTFYLFIYYFVLMVLLI), 202-222 (TTLVFLNIPFSVSFFVKIFSL), and 232-252 (FTLFLLFTMFLSVLAFSFWLI).

This sequence belongs to the complex I subunit 2 family.

The protein localises to the mitochondrion inner membrane. It carries out the reaction a ubiquinone + NADH + 5 H(+)(in) = a ubiquinol + NAD(+) + 4 H(+)(out). Core subunit of the mitochondrial membrane respiratory chain NADH dehydrogenase (Complex I) that is believed to belong to the minimal assembly required for catalysis. Complex I functions in the transfer of electrons from NADH to the respiratory chain. The immediate electron acceptor for the enzyme is believed to be ubiquinone. This chain is NADH-ubiquinone oxidoreductase chain 2, found in Caenorhabditis elegans.